The primary structure comprises 196 residues: ATP-dependent Clp protease proteolytic subunit (196 aa).

Ser96 serves as the catalytic Nucleophile. His121 is an active-site residue.

The protein belongs to the peptidase S14 family. Fourteen ClpP subunits assemble into 2 heptameric rings which stack back to back to give a disk-like structure with a central cavity, resembling the structure of eukaryotic proteasomes.

Its subcellular location is the cytoplasm. The catalysed reaction is Hydrolysis of proteins to small peptides in the presence of ATP and magnesium. alpha-casein is the usual test substrate. In the absence of ATP, only oligopeptides shorter than five residues are hydrolyzed (such as succinyl-Leu-Tyr-|-NHMec, and Leu-Tyr-Leu-|-Tyr-Trp, in which cleavage of the -Tyr-|-Leu- and -Tyr-|-Trp bonds also occurs).. In terms of biological role, cleaves peptides in various proteins in a process that requires ATP hydrolysis. Has a chymotrypsin-like activity. Plays a major role in the degradation of misfolded proteins. The protein is ATP-dependent Clp protease proteolytic subunit of Streptococcus mutans serotype c (strain ATCC 700610 / UA159).